The primary structure comprises 235 residues: Phosphoribosylaminoimidazole-succinocarboxamide synthase (235 aa).

It belongs to the SAICAR synthetase family.

The enzyme catalyses 5-amino-1-(5-phospho-D-ribosyl)imidazole-4-carboxylate + L-aspartate + ATP = (2S)-2-[5-amino-1-(5-phospho-beta-D-ribosyl)imidazole-4-carboxamido]succinate + ADP + phosphate + 2 H(+). It functions in the pathway purine metabolism; IMP biosynthesis via de novo pathway; 5-amino-1-(5-phospho-D-ribosyl)imidazole-4-carboxamide from 5-amino-1-(5-phospho-D-ribosyl)imidazole-4-carboxylate: step 1/2. This Streptococcus pneumoniae serotype 4 (strain ATCC BAA-334 / TIGR4) protein is Phosphoribosylaminoimidazole-succinocarboxamide synthase (purC).